Here is a 410-residue protein sequence, read N- to C-terminus: Adenosine receptor A2a (410 aa).

The Extracellular segment spans residues 1 to 4; sequence MGSS. The chain crosses the membrane as a helical span at residues 5–29; that stretch reads VYITVELAIAVLAILGNVLVCWAVW. Residues 30-39 are Cytoplasmic-facing; it reads INSNLQNVTN. A helical membrane pass occupies residues 40–63; the sequence is FFVVSLAAADIAVGVLAIPFAITI. Over 64 to 74 the chain is Extracellular; it reads STGFCAACHGC. 3 disulfide bridges follow: Cys68–Cys154, Cys71–Cys143, and Cys74–Cys161. The chain crosses the membrane as a helical span at residues 75–97; it reads LFFACFVLVLTQSSIFSLLAIAI. At 98 to 117 the chain is on the cytoplasmic side; sequence DRYIAIRIPLRYNGLVTGVR. The chain crosses the membrane as a helical span at residues 118-140; it reads AKGIIAICWVLSFAIGLTPMLGW. The Extracellular segment spans residues 141-168; it reads NNCSQKDGNSTKTCGEGRVTCLFEDVVP. N-linked (GlcNAc...) asparagine glycans are attached at residues Asn142 and Asn149. Glu164 is an adenosine binding site. The helical transmembrane segment at 169-193 threads the bilayer; that stretch reads MNYMVYYNFFAFVLLPLLLMLAIYL. Residues 194–229 are Cytoplasmic-facing; the sequence is RIFLAARRQLKQMESQPLPGERTRSTLQKEVHAAKS. The chain crosses the membrane as a helical span at residues 230–253; that stretch reads LAIIVGLFALCWLPLHIINCFTFF. Asn248 serves as a coordination point for adenosine. Cys254 and Cys257 are joined by a disulfide. Residues 254-261 lie on the Extracellular side of the membrane; it reads CSTCRHAP. The helical transmembrane segment at 262-285 threads the bilayer; sequence PWLMYLAIILSHSNSVVNPFIYAY. Ser272 and His273 together coordinate adenosine. Over 286–410 the chain is Cytoplasmic; sequence RIREFRQTFR…SSWSSEFAPS (125 aa). Residues 322 to 410 form an interaction with GAS2L2 region; it reads HSTEGEQVSL…SSWSSEFAPS (89 aa). Residues 344-410 are disordered; the sequence is GSATHSGRRP…SSWSSEFAPS (67 aa). Over residues 371–388 the composition is skewed to basic and acidic residues; that stretch reads RDVELPTQERQEGQEHPG. Positions 401-410 are enriched in polar residues; the sequence is SSWSSEFAPS.

Belongs to the G-protein coupled receptor 1 family. In terms of assembly, interacts (via cytoplasmic C-terminal domain) with USP4; the interaction is direct. May interact with DRD4. Interacts with NECAB2. Interacts (via cytoplasmic C-terminal domain) with GAS2L2; interaction enhances receptor-mediated adenylyl cyclase activity. Ubiquitinated. Deubiquitinated by USP4; leading to stabilization and expression at the cell surface. In terms of tissue distribution, expressed in striatal neurons (at protein level).

It localises to the cell membrane. Functionally, receptor for adenosine. The activity of this receptor is mediated by G proteins which activate adenylyl cyclase. In Rattus norvegicus (Rat), this protein is Adenosine receptor A2a (Adora2a).